Reading from the N-terminus, the 398-residue chain is Endoglucanase (398 aa).

The first 23 residues, 1 to 23 (MSPLKCMALAALGAVMFVGSAQA), serve as a signal peptide directing secretion. The Proton donor role is filled by glutamate 58. The active-site Nucleophile is aspartate 119.

Belongs to the glycosyl hydrolase 8 (cellulase D) family.

It is found in the secreted. It carries out the reaction Endohydrolysis of (1-&gt;4)-beta-D-glucosidic linkages in cellulose, lichenin and cereal beta-D-glucans.. It participates in glycan metabolism; bacterial cellulose biosynthesis. Functionally, hydrolyzes carboxymethylcellulose. In Pseudomonas fluorescens (strain SBW25), this protein is Endoglucanase (bcsZ).